The chain runs to 474 residues: Glutathione synthetase (474 aa).

Residue Ala2 is modified to N-acetylalanine. Arg125 is a substrate binding site. Glu144 lines the ATP pocket. Mg(2+) is bound by residues Glu144 and Asn146. Substrate contacts are provided by residues 148–151 (ISAS), 214–216 (ERN), Gln220, and 267–270 (RDGY). Residues Lys305, 364-373 (KPQREGGGNN), Tyr375, and 398-401 (MEKT) each bind ATP. Glu368 contacts Mg(2+). Position 415 is a phosphoserine (Ser415). Glu425 lines the ATP pocket. A substrate-binding site is contributed by Arg450. Residues Lys452 and Asp458 each contribute to the ATP site. Substrate is bound at residue 461–462 (VA).

This sequence belongs to the eukaryotic GSH synthase family. As to quaternary structure, homodimer. It depends on Mg(2+) as a cofactor.

The enzyme catalyses gamma-L-glutamyl-L-cysteine + glycine + ATP = glutathione + ADP + phosphate + H(+). It functions in the pathway sulfur metabolism; glutathione biosynthesis; glutathione from L-cysteine and L-glutamate: step 2/2. Catalyzes the production of glutathione from gamma-glutamylcysteine and glycine in an ATP-dependent manner. Glutathione (gamma-glutamylcysteinylglycine, GSH) is the most abundant intracellular thiol in living aerobic cells and is required for numerous processes including the protection of cells against oxidative damage, amino acid transport, the detoxification of foreign compounds, the maintenance of protein sulfhydryl groups in a reduced state and acts as a cofactor for a number of enzymes. This is Glutathione synthetase (GSS) from Macaca fascicularis (Crab-eating macaque).